Consider the following 258-residue polypeptide: Proteasome subunit alpha (258 aa).

This sequence belongs to the peptidase T1A family. As to quaternary structure, the 20S proteasome core is composed of 14 alpha and 14 beta subunits that assemble into four stacked heptameric rings, resulting in a barrel-shaped structure. The two inner rings, each composed of seven catalytic beta subunits, are sandwiched by two outer rings, each composed of seven alpha subunits. The catalytic chamber with the active sites is on the inside of the barrel. Has a gated structure, the ends of the cylinder being occluded by the N-termini of the alpha-subunits. Is capped by the proteasome-associated ATPase, ARC.

The protein resides in the cytoplasm. Its pathway is protein degradation; proteasomal Pup-dependent pathway. The formation of the proteasomal ATPase ARC-20S proteasome complex, likely via the docking of the C-termini of ARC into the intersubunit pockets in the alpha-rings, may trigger opening of the gate for substrate entry. Interconversion between the open-gate and close-gate conformations leads to a dynamic regulation of the 20S proteasome proteolysis activity. Its function is as follows. Component of the proteasome core, a large protease complex with broad specificity involved in protein degradation. In Nocardia farcinica (strain IFM 10152), this protein is Proteasome subunit alpha.